The sequence spans 337 residues: Glyceraldehyde-3-phosphate dehydrogenase 1, cytosolic (337 aa).

Residues 13 to 14 (RI), Asp-35, and Arg-82 contribute to the NAD(+) site. D-glyceraldehyde 3-phosphate is bound by residues 153–155 (SCT), Thr-184, 213–214 (TG), and Arg-236. The Nucleophile role is filled by Cys-154. Asn-318 provides a ligand contact to NAD(+).

It belongs to the glyceraldehyde-3-phosphate dehydrogenase family. In terms of assembly, homotetramer.

The protein resides in the cytoplasm. It catalyses the reaction D-glyceraldehyde 3-phosphate + phosphate + NAD(+) = (2R)-3-phospho-glyceroyl phosphate + NADH + H(+). The protein operates within carbohydrate degradation; glycolysis; pyruvate from D-glyceraldehyde 3-phosphate: step 1/5. Functionally, key enzyme in glycolysis that catalyzes the first step of the pathway by converting D-glyceraldehyde 3-phosphate (G3P) into 3-phospho-D-glyceroyl phosphate. Essential for the maintenance of cellular ATP levels and carbohydrate metabolism. The sequence is that of Glyceraldehyde-3-phosphate dehydrogenase 1, cytosolic (GAPC) from Hordeum vulgare (Barley).